The sequence spans 68 residues: UPF0434 protein H16_A0605 (68 aa).

The protein belongs to the UPF0434 family.

This Cupriavidus necator (strain ATCC 17699 / DSM 428 / KCTC 22496 / NCIMB 10442 / H16 / Stanier 337) (Ralstonia eutropha) protein is UPF0434 protein H16_A0605.